Reading from the N-terminus, the 499-residue chain is MPHPRRYHSSERGSRGSYHEHYQSRKHKRRRSRSWSSSSDRTRRRRREDSYHVRSRSSYDDHSSDRRLYDRRYCGSYRRNDYSRDRGEAYYDTDFRQSYEYHRENSSYRSQRSSRRKHRRRRRRSRTFSRSSSHSSRRAKSVEDDAEGHLIYHVGDWLQERYEIVSTLGEGTFGRVVQCVDHRRGGTQVALKIIKNVEKYKEAARLEINVLEKINEKDPDNKNLCVQMFDWFDYHGHMCISFELLGLSTFDFLKDNNYLPYPIHQVRHMAFQLCQAVKFLHDNKLTHTDLKPENILFVNSDYELTYNLEKKRDERSVKSTAVRVVDFGSATFDHEHHSTIVSTRHYRAPEVILELGWSQPCDVWSIGCIIFEYYVGFTLFQTHDNREHLAMMERILGPVPSRMIRKTRKQKYFYRGRLDWDENTSAGRYVRENCKPLRRYLTSEAEDHHQLFDLIENMLEYEPAKRLTLGEALQHPFFACLRTEPPNTKLWDSSRDISR.

Residues 1–65 form a disordered region; sequence MPHPRRYHSS…RSSYDDHSSD (65 aa). The segment covering 8–23 has biased composition (basic and acidic residues); it reads HSSERGSRGSYHEHYQ. Over residues 24–33 the composition is skewed to basic residues; it reads SRKHKRRRSR. Position 34 is a phosphoserine; by PKB/AKT1 (Ser34). Basic and acidic residues predominate over residues 47-65; it reads REDSYHVRSRSSYDDHSSD. Ser98 carries the post-translational modification Phosphoserine; by autocatalysis. The residue at position 99 (Tyr99) is a Phosphotyrosine; by autocatalysis. A disordered region spans residues 102-142; sequence HRENSSYRSQRSSRRKHRRRRRRSRTFSRSSSHSSRRAKSV. Over residues 112–127 the composition is skewed to basic residues; it reads RSSRRKHRRRRRRSRT. Phosphothreonine; by PKB/AKT1 is present on Thr127. Ser141 carries the post-translational modification Phosphoserine; by autocatalysis. Position 152 is a phosphotyrosine (Tyr152). The region spanning 163-479 is the Protein kinase domain; the sequence is EIVSTLGEGT…GEALQHPFFA (317 aa). Residues 168–176 and Lys192 contribute to the ATP site; that span reads LGEGTFGRV. Catalysis depends on Asp289, which acts as the Proton acceptor. Thr343 carries the post-translational modification Phosphothreonine; by PKB/AKT2.

The protein belongs to the protein kinase superfamily. CMGC Ser/Thr protein kinase family. Lammer subfamily. In terms of assembly, interacts with RBMX and UBL5. Interacts with AKT1. Autophosphorylates on all three types of residues. Phosphorylation on Ser-34 and Thr-127 by AKT1 is induced by ionizing radiation or insulin. Phosphorylation plays a critical role in cell proliferation following low dose radiation and prevents cell death following high dose radiation. Phosphorylation at Thr-343 by PKB/AKT2 induces its kinase activity which is required for its stability. The phosphorylation status at Ser-141 influences its subnuclear localization; inhibition of phosphorylation at Ser-141 results in accumulation in the nuclear speckle.

It localises to the nucleus. The protein resides in the nucleus speckle. It carries out the reaction L-seryl-[protein] + ATP = O-phospho-L-seryl-[protein] + ADP + H(+). It catalyses the reaction L-threonyl-[protein] + ATP = O-phospho-L-threonyl-[protein] + ADP + H(+). The catalysed reaction is L-tyrosyl-[protein] + ATP = O-phospho-L-tyrosyl-[protein] + ADP + H(+). With respect to regulation, 5,6-dichloro-1-b-D-ribofuranosylbenzimidazole (DRB) inhibits autophosphorylation. TG003 inhibits its kinase activity and affects the regulation of alternative splicing mediated by phosphorylation of SR proteins. Functionally, dual specificity kinase acting on both serine/threonine and tyrosine-containing substrates. Phosphorylates serine- and arginine-rich (SR) proteins of the spliceosomal complex. May be a constituent of a network of regulatory mechanisms that enable SR proteins to control RNA splicing and can cause redistribution of SR proteins from speckles to a diffuse nucleoplasmic distribution. Acts as a suppressor of hepatic gluconeogenesis and glucose output by repressing PPARGC1A transcriptional activity on gluconeogenic genes via its phosphorylation. Phosphorylates PPP2R5B thereby stimulating the assembly of PP2A phosphatase with the PPP2R5B-AKT1 complex leading to dephosphorylation of AKT1. Phosphorylates: PTPN1, SRSF1 and SRSF3. Regulates the alternative splicing of tissue factor (F3) pre-mRNA in endothelial cells. Phosphorylates PAGE4 at several serine and threonine residues and this phosphorylation attenuates the ability of PAGE4 to potentiate the transcriptional activator activity of JUN. The protein is Dual specificity protein kinase CLK2 (Clk2) of Mus musculus (Mouse).